Consider the following 280-residue polypeptide: uncharacterized protein (280 aa).

This sequence belongs to the herpesviridae BDLF2 family.

This is an uncharacterized protein from Saimiri sciureus (Common squirrel monkey).